Reading from the N-terminus, the 470-residue chain is AAA-ATPase At5g40000 (470 aa).

The N-terminal stretch at 1 to 30 (MMMMGDSFGSIGSSMASLFFLWATIQQIFP) is a signal peptide. 248 to 255 (GPPGTGKS) provides a ligand contact to ATP.

The protein belongs to the AAA ATPase family. BCS1 subfamily. Mg(2+) serves as cofactor.

It catalyses the reaction ATP + H2O = ADP + phosphate + H(+). This Arabidopsis thaliana (Mouse-ear cress) protein is AAA-ATPase At5g40000.